Here is an 862-residue protein sequence, read N- to C-terminus: Protein JOKA2 (862 aa).

Residues 6-90 form the PB1 domain; sequence SIVIKVKYEE…NPLRISARLN (85 aa). Residues 92–106 show a composition bias toward low complexity; the sequence is GERSGRASARSSGNS. Disordered stretches follow at residues 92–117, 194–234, and 295–345; these read GERSGRASARSSGNSTPLRSPRVQPP, KGNT…ASNE, and VRNS…DSSG. Positions 325–345 are enriched in polar residues; it reads SASSSKVKQCNWDSPNADSSG. The ZZ-type; degenerate zinc-finger motif lies at 442-492; sequence HKGVRCDGCGVHPITGPRFISKVKENYDLCSICFAEMGNDADYIRMDRPLT. The Zn(2+) site is built by Cys-447, Cys-450, Cys-471, and Cys-474. In terms of domain architecture, UBA spans 811 to 860; sequence SVDDLCGVAEWDPILEELKEMGFCDKEMNKKLLKKNNGSIKRVVMDLIAG. The ATG8 interacting motif (AIM) motif lies at 817 to 824; the sequence is GVAEWDPI.

As to quaternary structure, interacts (via C-terminal AIM motif) with ATG8CL.

The protein resides in the vacuole. It localises to the cytoplasmic vesicle. The protein localises to the autophagosome. Its function is as follows. Autophagic substrate that functions as a host autophagy cargo receptor. Requires ATG8 protein expression to be recognized as an autophagic substrate. Activates ATG8CL-mediated selective autophagy, and contributes to defense against the fungal pathogen Phytophtora infestans. This Solanum tuberosum (Potato) protein is Protein JOKA2.